The primary structure comprises 355 residues: UPF0421 protein BCE33L2478 (355 aa).

4 helical membrane-spanning segments follow: residues 19–39 (IAVF…IFAV), 74–94 (FTFF…FTIV), 109–129 (TLTA…AFLI), and 131–151 (LATT…ILPP).

Belongs to the UPF0421 family.

Its subcellular location is the cell membrane. This is UPF0421 protein BCE33L2478 from Bacillus cereus (strain ZK / E33L).